Here is a 135-residue protein sequence, read N- to C-terminus: Large ribosomal subunit protein bL21 (135 aa).

A disordered region spans residues 114–135; sequence EAEKETPVLDETPAEEVETAAE. Acidic residues predominate over residues 125–135; that stretch reads TPAEEVETAAE.

It belongs to the bacterial ribosomal protein bL21 family. In terms of assembly, part of the 50S ribosomal subunit. Contacts protein L20.

Its function is as follows. This protein binds to 23S rRNA in the presence of protein L20. The sequence is that of Large ribosomal subunit protein bL21 from Nostoc punctiforme (strain ATCC 29133 / PCC 73102).